The primary structure comprises 617 residues: Chaperone protein HscA homolog (617 aa).

Belongs to the heat shock protein 70 family.

Its function is as follows. Chaperone involved in the maturation of iron-sulfur cluster-containing proteins. Has a low intrinsic ATPase activity which is markedly stimulated by HscB. The polypeptide is Chaperone protein HscA homolog (Aliivibrio salmonicida (strain LFI1238) (Vibrio salmonicida (strain LFI1238))).